A 354-amino-acid chain; its full sequence is GTPase Obg (354 aa).

The Obg domain maps to 1-159; the sequence is MQFIDHAEIE…KQLRLELKLL (159 aa). In terms of domain architecture, OBG-type G spans 160–328; sequence AEVGIIGLPN…LLQEIWDVLD (169 aa). GTP-binding positions include 166 to 173, 191 to 195, 213 to 216, 280 to 283, and 309 to 311; these read GLPNAGKS, FTTLI, DIPG, NKLD, and SAV. Mg(2+) is bound by residues S173 and T193.

This sequence belongs to the TRAFAC class OBG-HflX-like GTPase superfamily. OBG GTPase family. As to quaternary structure, monomer. It depends on Mg(2+) as a cofactor.

Its subcellular location is the cytoplasm. An essential GTPase which binds GTP, GDP and possibly (p)ppGpp with moderate affinity, with high nucleotide exchange rates and a fairly low GTP hydrolysis rate. Plays a role in control of the cell cycle, stress response, ribosome biogenesis and in those bacteria that undergo differentiation, in morphogenesis control. This Picosynechococcus sp. (strain ATCC 27264 / PCC 7002 / PR-6) (Agmenellum quadruplicatum) protein is GTPase Obg.